Reading from the N-terminus, the 158-residue chain is Snaclec coagulation factor X-activating enzyme light chain 2 (158 aa).

Positions 1–24 (MGRFISVSFGLLVVFLSLSGTGAG) are cleaved as a signal peptide. 3 disulfide bridges follow: C27-C38, C55-C152, and C127-C144. Residues 34–153 (YRYFCYRVFK…CEERYLFVCK (120 aa)) enclose the C-type lectin domain. N82 is a glycosylation site (N-linked (GlcNAc...) (complex) asparagine).

It belongs to the snaclec family. Heterotrimer; disulfide-linked. The heterotrimer consists of 1 heavy chain (a metalloproteinase) and 2 light chains: LC1 and LC2. In terms of processing, N-glycosylated; probably required for conformation. Removal of easily accessible sugars does not change its functional capacity, but removal of the core sugars with N-glycanase causes a virtually complete loss of enzyme activity, apparently as a result of major conformational changes in the molecule. Not O-glycosylated. As to expression, expressed by the venom gland.

The protein resides in the secreted. Functionally, regulatory subunit of the blood coagulation factor X- and IX-activating enzyme. The enzyme activates coagulation factor X (F10) by cleaving the Arg-Ile bond and is also able to activate coagulation factor IX (F9) and protein S (PROS1) by specific cleavage of Arg-Ile and Arg-Val bonds. May serve as an exosite by which the enzyme recognizes and binds to the Gla domain of factor X (F10) and factor IX (F9) in a calcium-dependent manner. The protein is Snaclec coagulation factor X-activating enzyme light chain 2 (LC2) of Daboia siamensis (Eastern Russel's viper).